We begin with the raw amino-acid sequence, 160 residues long: Transcription elongation factor GreA (160 aa).

Residues 1–72 (MAEKTYPMTL…QISSLETKIR (72 aa)) adopt a coiled-coil conformation.

The protein belongs to the GreA/GreB family.

Functionally, necessary for efficient RNA polymerase transcription elongation past template-encoded arresting sites. The arresting sites in DNA have the property of trapping a certain fraction of elongating RNA polymerases that pass through, resulting in locked ternary complexes. Cleavage of the nascent transcript by cleavage factors such as GreA or GreB allows the resumption of elongation from the new 3'terminus. GreA releases sequences of 2 to 3 nucleotides. This is Transcription elongation factor GreA from Streptococcus pneumoniae serotype 4 (strain ATCC BAA-334 / TIGR4).